The following is a 151-amino-acid chain: Epigen (151 aa).

Residues 1 to 18 (MAFGMLIYILLKAMGALS) form the signal peptide. Residues 19-108 (EEAALTASSL…NSYAHNSYER (90 aa)) lie on the Extracellular side of the membrane. N-linked (GlcNAc...) asparagine glycosylation occurs at Asn-39. In terms of domain architecture, EGF-like spans 54–94 (LMQTCLEEHHSYCINGLCAFHSELRKPICKCLAGYNGERCE). Cystine bridges form between Cys-58–Cys-71, Cys-66–Cys-82, and Cys-84–Cys-93. Residues 109–129 (YIAVGIGIGILTSGILAIIYC) traverse the membrane as a helical segment. The Cytoplasmic portion of the chain corresponds to 130-151 (YVRKRCRKLKSPYKVCMGETAL).

It is found in the membrane. In terms of biological role, promotes the growth of epithelial cells. This Gallus gallus (Chicken) protein is Epigen (EPGN).